The sequence spans 347 residues: MNPLILSMILTTLAMGTMATMLSSNWLLAWMGLEMNMLAMIPILTMNPNPRSTEAATKYFLTQATASMLLMMAIMINFMLSGQWSITKLPNTTVSSMALAALMMKLGLAPFHFWVPEVTQGTSLTSGMILLTWQKLAPLSILYQIDTSVDITILTVSGLLSILVGGWGGLNQTQLRKILAYSSIAHMGWMLIIMPYNPSLTILNLLIYILMTLSIFMIMMNNHSTSTLTLALLWNKAPMMMILLTITLLSLGGLPPLSGFMPKWLIIHELTKNDSIILPMSMAMFALLNLYFYMRLIYSSSLTMFPSTNNMKMKWHFTNRSHLTLLPPLIILSTLTLPLTPFLSILE.

10 consecutive transmembrane segments (helical) span residues 26–46, 60–80, 96–116, 123–143, 151–171, 178–198, 200–220, 240–260, 274–294, and 325–345; these read WLLAWMGLEMNMLAMIPILTM, FLTQATASMLLMMAIMINFML, SMALAALMMKLGLAPFHFWVP, SLTSGMILLTWQKLAPLSILY, ITILTVSGLLSILVGGWGGLN, ILAYSSIAHMGWMLIIMPYNP, LTILNLLIYILMTLSIFMIMM, MMILLTITLLSLGGLPPLSGF, DSIILPMSMAMFALLNLYFYM, and LLPPLIILSTLTLPLTPFLSI.

This sequence belongs to the complex I subunit 2 family. Core subunit of respiratory chain NADH dehydrogenase (Complex I) which is composed of 45 different subunits. Interacts with TMEM242.

Its subcellular location is the mitochondrion inner membrane. It catalyses the reaction a ubiquinone + NADH + 5 H(+)(in) = a ubiquinol + NAD(+) + 4 H(+)(out). Its function is as follows. Core subunit of the mitochondrial membrane respiratory chain NADH dehydrogenase (Complex I) which catalyzes electron transfer from NADH through the respiratory chain, using ubiquinone as an electron acceptor. Essential for the catalytic activity and assembly of complex I. This Dugong dugon (Dugong) protein is NADH-ubiquinone oxidoreductase chain 2.